The primary structure comprises 357 residues: Holliday junction branch migration complex subunit RuvB (357 aa).

The segment at 1–27 (MGRFDDAGAQDAEPDDRDVSPALTVGE) is disordered. The segment at 1–195 (MGRFDDAGAQ…FGFTAHMDFY (195 aa)) is large ATPase domain (RuvB-L). Residues Leu34, Arg35, Gly76, Lys79, Thr80, Ser81, 142-144 (EDF), Arg185, Tyr195, and Arg232 each bind ATP. A Mg(2+)-binding site is contributed by Thr80. The interval 196-266 (EPAELERVLA…IAKAALEVYD (71 aa)) is small ATPAse domain (RuvB-S). The segment at 269–357 (ELGLDRLDRA…TGLGQTGLFD (89 aa)) is head domain (RuvB-H). 2 residues coordinate DNA: Arg324 and Arg329.

This sequence belongs to the RuvB family. Homohexamer. Forms an RuvA(8)-RuvB(12)-Holliday junction (HJ) complex. HJ DNA is sandwiched between 2 RuvA tetramers; dsDNA enters through RuvA and exits via RuvB. An RuvB hexamer assembles on each DNA strand where it exits the tetramer. Each RuvB hexamer is contacted by two RuvA subunits (via domain III) on 2 adjacent RuvB subunits; this complex drives branch migration. In the full resolvosome a probable DNA-RuvA(4)-RuvB(12)-RuvC(2) complex forms which resolves the HJ.

It is found in the cytoplasm. The enzyme catalyses ATP + H2O = ADP + phosphate + H(+). In terms of biological role, the RuvA-RuvB-RuvC complex processes Holliday junction (HJ) DNA during genetic recombination and DNA repair, while the RuvA-RuvB complex plays an important role in the rescue of blocked DNA replication forks via replication fork reversal (RFR). RuvA specifically binds to HJ cruciform DNA, conferring on it an open structure. The RuvB hexamer acts as an ATP-dependent pump, pulling dsDNA into and through the RuvAB complex. RuvB forms 2 homohexamers on either side of HJ DNA bound by 1 or 2 RuvA tetramers; 4 subunits per hexamer contact DNA at a time. Coordinated motions by a converter formed by DNA-disengaged RuvB subunits stimulates ATP hydrolysis and nucleotide exchange. Immobilization of the converter enables RuvB to convert the ATP-contained energy into a lever motion, pulling 2 nucleotides of DNA out of the RuvA tetramer per ATP hydrolyzed, thus driving DNA branch migration. The RuvB motors rotate together with the DNA substrate, which together with the progressing nucleotide cycle form the mechanistic basis for DNA recombination by continuous HJ branch migration. Branch migration allows RuvC to scan DNA until it finds its consensus sequence, where it cleaves and resolves cruciform DNA. The polypeptide is Holliday junction branch migration complex subunit RuvB (Mycobacterium sp. (strain JLS)).